The chain runs to 358 residues: Biotin synthase (358 aa).

One can recognise a Radical SAM core domain in the interval 50–277 (NEVQVSTLCS…KSHVRLSAGR (228 aa)). Residues C65, C69, and C72 each contribute to the [4Fe-4S] cluster site. Residues C109, C140, C200, and R272 each coordinate [2Fe-2S] cluster.

It belongs to the radical SAM superfamily. Biotin synthase family. Homodimer. [4Fe-4S] cluster is required as a cofactor. Requires [2Fe-2S] cluster as cofactor.

It catalyses the reaction (4R,5S)-dethiobiotin + (sulfur carrier)-SH + 2 reduced [2Fe-2S]-[ferredoxin] + 2 S-adenosyl-L-methionine = (sulfur carrier)-H + biotin + 2 5'-deoxyadenosine + 2 L-methionine + 2 oxidized [2Fe-2S]-[ferredoxin]. Its pathway is cofactor biosynthesis; biotin biosynthesis; biotin from 7,8-diaminononanoate: step 2/2. Functionally, catalyzes the conversion of dethiobiotin (DTB) to biotin by the insertion of a sulfur atom into dethiobiotin via a radical-based mechanism. The chain is Biotin synthase from Cellvibrio japonicus (strain Ueda107) (Pseudomonas fluorescens subsp. cellulosa).